The chain runs to 349 residues: tRNA pseudouridine synthase D (349 aa).

Residue Phe-27 participates in substrate binding. Asp-80 serves as the catalytic Nucleophile. Residue Asn-129 coordinates substrate. Residues 155–303 enclose the TRUD domain; that stretch reads GVPNYFGAQR…VEAARRAMLL (149 aa). Phe-329 contributes to the substrate binding site.

It belongs to the pseudouridine synthase TruD family.

It carries out the reaction uridine(13) in tRNA = pseudouridine(13) in tRNA. In terms of biological role, responsible for synthesis of pseudouridine from uracil-13 in transfer RNAs. The sequence is that of tRNA pseudouridine synthase D from Shigella boydii serotype 18 (strain CDC 3083-94 / BS512).